Reading from the N-terminus, the 304-residue chain is MLNTPFELVTSLGFAGFVLLLLAMPLAFWAVSSQSRAGLVRLLVAVANLLFTAQLILRWWQSGHFPISNLYESLCFLAWACTLTQLLVERAWPSPIVAAAATPMGLGCIAFASFALPDQLQSAAPLVPALRSSWLVMHVSVIMVSYAALLVGSLLSLAVLVTDRDQSLELRSSSIGSGGFRQAASIANGGSVQLQSVQLSTNEQLDSLSYRTITVGFLMLTVGIVSGAVWANEAWGSYWSWDPKETWALICWLVYAAYLHTRLSRGWQGRRPALVAVVGLVVIAVCYIGVNLLGIGLHSYGWFF.

8 helical membrane-spanning segments follow: residues 11–31, 37–57, 63–83, 96–116, 141–161, 212–232, 246–263, and 275–295; these read SLGF…FWAV, AGLV…QLIL, GHFP…ACTL, IVAA…SFAL, VIMV…AVLV, TITV…VWAN, TWAL…HTRL, and VAVV…LLGI.

The protein belongs to the CcmF/CycK/Ccl1/NrfE/CcsA family. May interact with ccs1.

The protein resides in the cellular thylakoid membrane. Its function is as follows. Required during biogenesis of c-type cytochromes (cytochrome c6 and cytochrome f) at the step of heme attachment. The protein is Cytochrome c biogenesis protein CcsA of Synechococcus sp. (strain CC9605).